Consider the following 803-residue polypeptide: Phenylalanine--tRNA ligase beta subunit (803 aa).

Residues 40 to 150 (SNKFYGIVIA…IDAPIGCNFY (111 aa)) form the tRNA-binding domain. The B5 domain occupies 405–480 (PKIKIIKLHR…RIYGYNHIPK (76 aa)). 2 residues coordinate Mg(2+): Asp458 and Glu468. The region spanning 710–803 (SKFPKNYRDI…LKKHFNAIFR (94 aa)) is the FDX-ACB domain.

It belongs to the phenylalanyl-tRNA synthetase beta subunit family. Type 1 subfamily. Tetramer of two alpha and two beta subunits. Mg(2+) serves as cofactor.

The protein resides in the cytoplasm. It catalyses the reaction tRNA(Phe) + L-phenylalanine + ATP = L-phenylalanyl-tRNA(Phe) + AMP + diphosphate + H(+). This chain is Phenylalanine--tRNA ligase beta subunit, found in Blochmanniella floridana.